The chain runs to 399 residues: Pre-mycofactocin synthase (399 aa).

An FMN hydroxy acid dehydrogenase domain is found at 4–386 (ARDIWFETVA…VPEDILVPEG (383 aa)). The FMN site is built by S111 and Q131. Y133 provides a ligand contact to a 2-oxocarboxylate. T159 contacts FMN. R168 contributes to the a 2-oxocarboxylate binding site. K257 contributes to the FMN binding site. The active-site Proton acceptor is the H281. FMN-binding positions include 312-316 (DGGIR) and 335-336 (GR).

The protein belongs to the FMN-dependent alpha-hydroxy acid dehydrogenase family. Requires FMN as cofactor.

It catalyses the reaction 3-amino-5-[(4-hydroxyphenyl)methyl]-4,4-dimethyl-2-pyrrolidin-2-one + O2 + H2O = pre-mycofactocin + H2O2 + NH4(+). In terms of biological role, involved in the biosynthesis of the enzyme cofactor mycofactocin (MFT). Catalyzes the oxidative deamination of AHDP (3-amino-5-[(4-hydroxyphenyl)methyl]-4,4-dimethyl-2-pyrrolidin-2-one), forming an alpha-keto amide moiety on the resulting molecule, which is called pre-mycofactocin (PMFT). This reaction occurs via a 5-[(4-hydroxyphenyl)methyl]-3-imino-4,4-dimethylpyrrolidin-2-one intermediate, which converts to PMFT. The alpha-keto amide moiety is the redox-active center for the redox activity of mycofactocin. Is required for the in vivo ethanol assimilation in M.smegmatis. This is Pre-mycofactocin synthase from Mycolicibacterium smegmatis (strain ATCC 700084 / mc(2)155) (Mycobacterium smegmatis).